The sequence spans 241 residues: Chaperone protein HifB (241 aa).

A signal peptide spans 1 to 27; it reads MGKTMFKKTLLFFTALFFAALCAFSAN.

It belongs to the periplasmic pilus chaperone family.

It localises to the periplasm. Functionally, mediates assembly of pili by forming soluble multimeric complexes with pili subunits as an intermediate step in the assembly process. This protein is involved in type B pili (HifA) assembly. This Haemophilus influenzae protein is Chaperone protein HifB (hifB).